Consider the following 815-residue polypeptide: MEPSTCRTMESEEDYVEEKESEKCVKEGVTNPSNSSQQALLKADYKALKNGVPSPIMATKIPKKVIAPVDTGDLEAGRRKRRRKRRSLAINLTNCKYESVRRAAQMCGLKEVGEDEEWTLYWTDCAVSLERVMDMKRFQKINHFPGMTEICRKDLLARNLNRMYKLYPSEYNIFPRTWCLPADYGDFQSYGRQRKARTYICKPDSGCQGRGIFITRNPREIKPGEHMICQQYISKPLLIDGFKFDMRVYVLITSCDPLRIFTYEEGLARFATTPYMEPSHNNLDNVCMHLTNYAINKHNENFVRDGAVGSKRKLSTLNIWLQEHSYNPGELWGDIEDIIIKTIISAHSVLRHNYRTCFPQYLNGGTCACFEILGFDILLDHKLKPWLLEVNHSPSFTTDSCLDQEVKDALLCDAMTLVNLRGCDKRKVMEEDKRRVKERLFQCYRQPRESRKEKTESSHVAMLDQERYEDSHLGKYRRIYPGPDTEKYARFFKHNGSLFQETAASKAREECARQQLEEIRLKQEQQETSGTKRQKARDQNQGESAGEKSRPRAGLQSLSTHLAYRNRNWEKELLPGQLDTMRPQEIVEEEELERMKALLQRETLIRSLGIVEQLTRLQHPGPQGQKKLHESRDRLGSQELKSMSLVLLVLLRGAATEQGAPHFLHPVLPHESIPRILGALPSMNAAIPHVPRYHLQPKNFNWTGEPAAINSCSLSMKKAGRCYFSSARIRLTSQGQASRRLEAINRVLAGSVPPTLTPKQGYFLQPERVASDSWTECTLPSMVNSEHRAAKVPLCPASAPMLQRSRALLNINQFR.

The 346-residue stretch at 85–430 (RRSLAINLTN…RGCDKRKVME (346 aa)) folds into the TTL domain. ATP-binding positions include lysine 202, 208 to 209 (QG), 230 to 233 (QQYI), and 243 to 245 (KFD). Glutamine 208 serves as a coordination point for a protein. Arginine 269 is a binding site for L-glutamate. 291–292 (TN) is an ATP binding site. L-glutamate is bound by residues tyrosine 293 and lysine 311. 3 residues coordinate Mg(2+): aspartate 376, glutamate 389, and asparagine 391. Residues 401-482 (CLDQEVKDAL…LGKYRRIYPG (82 aa)) are c-MTBD region. Lysine 407 is a binding site for L-glutamate. The stretch at 504–528 (ASKAREECARQQLEEIRLKQEQQET) forms a coiled coil. The disordered stretch occupies residues 520–556 (RLKQEQQETSGTKRQKARDQNQGESAGEKSRPRAGLQ). Over residues 536-550 (ARDQNQGESAGEKSR) the composition is skewed to basic and acidic residues.

Belongs to the tubulin--tyrosine ligase family. Requires Mg(2+) as cofactor.

It carries out the reaction (L-glutamyl)(n)-gamma-L-glutamyl-L-glutamyl-[protein] + L-glutamate + ATP = (L-glutamyl)(n+1)-gamma-L-glutamyl-L-glutamyl-[protein] + ADP + phosphate + H(+). Functionally, polyglutamylase which modifies tubulin, generating polyglutamate side chains of variable lengths on the gamma-carboxyl group of specific glutamate residues within the C-terminal tail of tubulin. Mediates ATP-dependent polyglutamate side-chain elongation of the polyglutamylation reaction but not the initiation step. Preferentially modifies the alpha-tubulin tail over a beta-tail. This is Tubulin polyglutamylase TTLL13 from Homo sapiens (Human).